The sequence spans 510 residues: Internal alternative NAD(P)H-ubiquinone oxidoreductase A1, mitochondrial (510 aa).

The N-terminal 48 residues, 1–48, are a transit peptide targeting the mitochondrion; that stretch reads MLWIKNLARISQTTSSSVGNVFRNPESYTLSSRFCTALQKQQVTDTVQ. 75 to 105 provides a ligand contact to FAD; that stretch reads RVLVLGSGWAGCRVLKGIDTSIYDVVCVSPR. 242–278 serves as a coordination point for NAD(+); sequence LHCVVVGGGPTGVEFSGELSDFIMKDVRQRYSHVKDD. The Microbody targeting signal signature appears at 501–510; the sequence is FVFGRDISRI.

Belongs to the NADH dehydrogenase family. It depends on FAD as a cofactor. In terms of tissue distribution, expressed in seedlings, cotyledons, young leaves, stems and flowers and, to a lower extent, in roots and buds.

The protein resides in the mitochondrion inner membrane. Its subcellular location is the peroxisome. The catalysed reaction is a quinone + NADH + H(+) = a quinol + NAD(+). It carries out the reaction a ubiquinone + NADH + H(+) = a ubiquinol + NAD(+). Its function is as follows. Alternative NADH-ubiquinone oxidoreductase which catalyzes the oxidation of mitochondrial NADH does not translocate protons across the inner mitochondrial membrane. The chain is Internal alternative NAD(P)H-ubiquinone oxidoreductase A1, mitochondrial (NDA1) from Arabidopsis thaliana (Mouse-ear cress).